The following is a 512-amino-acid chain: tRNA-2-methylthio-N(6)-dimethylallyladenosine synthase (512 aa).

The disordered stretch occupies residues 1–20 (MLQQADGVSPDRSSCDTPAP). The 117-residue stretch at 21–137 (RTFEVRTYGC…LPTLLDRARH (117 aa)) folds into the MTTase N-terminal domain. Residues Cys-30, Cys-66, Cys-100, Cys-174, Cys-178, and Cys-181 each coordinate [4Fe-4S] cluster. The Radical SAM core domain maps to 160 to 397 (RESAYAAWVS…ELQERISWEE (238 aa)). The region spanning 399 to 469 (RAQIGREVEL…PHHLIADAGP (71 aa)) is the TRAM domain. Residues 470–486 (AEHRRTRAGDAHAEGRT) are compositionally biased toward basic and acidic residues. Residues 470-512 (AEHRRTRAGDAHAEGRTPKTGVGLGMPGIGAPEPAPVTQGCAL) are disordered.

It belongs to the methylthiotransferase family. MiaB subfamily. As to quaternary structure, monomer. The cofactor is [4Fe-4S] cluster.

It localises to the cytoplasm. The enzyme catalyses N(6)-dimethylallyladenosine(37) in tRNA + (sulfur carrier)-SH + AH2 + 2 S-adenosyl-L-methionine = 2-methylsulfanyl-N(6)-dimethylallyladenosine(37) in tRNA + (sulfur carrier)-H + 5'-deoxyadenosine + L-methionine + A + S-adenosyl-L-homocysteine + 2 H(+). Catalyzes the methylthiolation of N6-(dimethylallyl)adenosine (i(6)A), leading to the formation of 2-methylthio-N6-(dimethylallyl)adenosine (ms(2)i(6)A) at position 37 in tRNAs that read codons beginning with uridine. This is tRNA-2-methylthio-N(6)-dimethylallyladenosine synthase from Mycolicibacterium gilvum (strain PYR-GCK) (Mycobacterium gilvum (strain PYR-GCK)).